Consider the following 580-residue polypeptide: Adenine deaminase 2 (580 aa).

Belongs to the metallo-dependent hydrolases superfamily. Adenine deaminase family. Mn(2+) is required as a cofactor.

It carries out the reaction adenine + H2O + H(+) = hypoxanthine + NH4(+). The protein is Adenine deaminase 2 of Latilactobacillus sakei subsp. sakei (strain 23K) (Lactobacillus sakei subsp. sakei).